The following is a 135-amino-acid chain: Large ribosomal subunit protein uL16c (135 aa).

Over residues 1–17 (MLSPKRTRFRKQHRGRM) the composition is skewed to basic residues. The interval 1–20 (MLSPKRTRFRKQHRGRMKGT) is disordered.

It belongs to the universal ribosomal protein uL16 family. Part of the 50S ribosomal subunit.

The protein localises to the plastid. It localises to the chloroplast. The sequence is that of Large ribosomal subunit protein uL16c from Lemna minor (Common duckweed).